Here is a 334-residue protein sequence, read N- to C-terminus: Beta-ketoacyl-[acyl-carrier-protein] synthase III (334 aa).

Catalysis depends on residues cysteine 116 and histidine 256. The ACP-binding stretch occupies residues 257-261; it reads QANLR. Asparagine 286 is a catalytic residue.

It belongs to the thiolase-like superfamily. FabH family. As to quaternary structure, homodimer.

The protein localises to the cytoplasm. It catalyses the reaction malonyl-[ACP] + acetyl-CoA + H(+) = 3-oxobutanoyl-[ACP] + CO2 + CoA. It participates in lipid metabolism; fatty acid biosynthesis. Functionally, catalyzes the condensation reaction of fatty acid synthesis by the addition to an acyl acceptor of two carbons from malonyl-ACP. Catalyzes the first condensation reaction which initiates fatty acid synthesis and may therefore play a role in governing the total rate of fatty acid production. Possesses both acetoacetyl-ACP synthase and acetyl transacylase activities. Its substrate specificity determines the biosynthesis of branched-chain and/or straight-chain of fatty acids. This is Beta-ketoacyl-[acyl-carrier-protein] synthase III from Phocaeicola vulgatus (strain ATCC 8482 / DSM 1447 / JCM 5826 / CCUG 4940 / NBRC 14291 / NCTC 11154) (Bacteroides vulgatus).